Reading from the N-terminus, the 107-residue chain is Cytochrome c-550 (107 aa).

Residues C11, C14, H15, and M80 each contribute to the heme c site.

Binds 1 heme c group covalently per subunit.

The protein is Cytochrome c-550 of Ancylobacter novellus (Thiobacillus novellus).